Reading from the N-terminus, the 719-residue chain is Calpain-12 (719 aa).

The region spanning 45-341 is the Calpain catalytic domain; it reads LFRDPYFPAG…FDTVQICSLS (297 aa). Active-site residues include Cys105, His259, and Asn283. A domain III region spans residues 342-540; it reads PEVLGPSPEG…DDVISADLQS (199 aa). A compositionally biased stretch (acidic residues) spans 393–402; that stretch reads DEEDDEDEEG. The tract at residues 393–418 is disordered; it reads DEEDDEDEEGPWGGWGAAGARGPARG. The interval 541-719 is domain IV; it reads LQGPYLPLEL…RQWMEVATFS (179 aa). In terms of domain architecture, EF-hand spans 620–655; the sequence is GYLLEWQAIFNKFDEDTSGTMNSYELRLALNAAGFH. Residues Asp633, Asp635, Ser637, Thr639, and Glu644 each coordinate Ca(2+).

Belongs to the peptidase C2 family.

In terms of biological role, calcium-regulated non-lysosomal thiol-protease. The chain is Calpain-12 (CAPN12) from Homo sapiens (Human).